Here is a 326-residue protein sequence, read N- to C-terminus: Meso-diaminopimelate D-dehydrogenase (326 aa).

NADP(+) is bound by residues 11–14 (YGNL), 35–37 (TRR), 69–72 (CGGS), 92–94 (SFD), and 121–125 (VGWDP). Substrate contacts are provided by residues aspartate 94, aspartate 124, tryptophan 148, 154–155 (QG), threonine 173, arginine 199, histidine 249, and asparagine 276.

This sequence belongs to the diaminopimelate dehydrogenase family. In terms of assembly, homodimer.

It carries out the reaction meso-2,6-diaminopimelate + NADP(+) + H2O = (S)-2-amino-6-oxoheptanedioate + NH4(+) + NADPH + H(+). The protein operates within amino-acid biosynthesis; L-lysine biosynthesis via DAP pathway; DL-2,6-diaminopimelate from (S)-tetrahydrodipicolinate: step 1/1. With respect to regulation, l,L-2,6-diaminopimelate, D,D-2,6-diaminopimelate and meso-2,5-diaminoadipate competitively inhibit the oxidation of meso-2,6-diaminopimelate. L-2-amino-6-methylene-pimelate is also a potent competitive inhibitor (5 uM) of this reaction. Glyoxylate inhibits the reductive amination of L-2-amino-6-oxopimelate about 30%. The enzyme is inhibited completely by p-chloromercuribenzoate and HgCl(2) in vitro. Its function is as follows. Catalyzes the reversible NADPH-dependent reductive amination of L-2-amino-6-oxopimelate, the acyclic form of L-tetrahydrodipicolinate, to generate the meso compound, D,L-2,6-diaminopimelate. Probably plays a role in lysine biosynthesis. Exhibits a high substrate specificity, since alpha-ketoglutarate, pyruvate, oxaloacetate, glyoxylate, alpha-ketobutyrate, alpha-ketovalerate, alpha-ketocaproate, alpha-ketoisocaproate, alpha-ketoisovalerate, and phenylpyruvate are not substrates for the reductive amination reaction, and L,L-2,6-diaminopimelate, D,D-2,6-diaminopimelate, DL-alpha-aminopimelate, meso- and DL-2,5-diaminoadipate, L-djenkolate, L-cystine, L-lysine, S-(beta-aminoethy1)-L-homocysteine, L-ornithine, L-arginine, L-alpha,gamma-diaminobutyrate, L-histidine, L-phenylalanine, L-tyrosine, L-glutamate, L-aspartate, L-leucine, L-valine, L-methionine, L-serine, L-alanine, L-alpha-aminobutyrate, D-lysine, D-glutamate, D-leucine, D-alanine, D-phenylalanine, epsilon-aminocaproate, 7-aminoheptanoate, and 8-aminooctanoate are not substrates for the oxidative deamination reaction. Cannot use NAD(+) or NAD(+) analogs instead of NADP(+) for the oxidative deamination reaction. The chain is Meso-diaminopimelate D-dehydrogenase (dapdh) from Lysinibacillus sphaericus (Bacillus sphaericus).